Reading from the N-terminus, the 1374-residue chain is DNA-directed RNA polymerase subunit beta' (1374 aa).

Zn(2+)-binding residues include Cys-71, Cys-73, Cys-86, and Cys-89. Positions 462, 464, and 466 each coordinate Mg(2+). Residues Cys-810, Cys-884, Cys-891, and Cys-894 each coordinate Zn(2+).

It belongs to the RNA polymerase beta' chain family. The RNAP catalytic core consists of 2 alpha, 1 beta, 1 beta' and 1 omega subunit. When a sigma factor is associated with the core the holoenzyme is formed, which can initiate transcription. Mg(2+) is required as a cofactor. Requires Zn(2+) as cofactor.

It catalyses the reaction RNA(n) + a ribonucleoside 5'-triphosphate = RNA(n+1) + diphosphate. Its function is as follows. DNA-dependent RNA polymerase catalyzes the transcription of DNA into RNA using the four ribonucleoside triphosphates as substrates. The sequence is that of DNA-directed RNA polymerase subunit beta' from Rickettsia massiliae (strain Mtu5).